The chain runs to 155 residues: MITQSALEMRDALAEGGSLIGLDTGTKTIGVALCDREWRFATAGTTIRRTKFAADKAQIRAIVAERGVKGIVIGLPLNMDGSESPRSQGARAMARNLEDLGLPILLWDERWTTQAAERAMIEQDFSRAKRAERIDSHAAALILQGAIDALAGSAF.

Belongs to the YqgF nuclease family.

The protein resides in the cytoplasm. Could be a nuclease involved in processing of the 5'-end of pre-16S rRNA. In Novosphingobium aromaticivorans (strain ATCC 700278 / DSM 12444 / CCUG 56034 / CIP 105152 / NBRC 16084 / F199), this protein is Putative pre-16S rRNA nuclease.